The primary structure comprises 196 residues: Elongation factor Ts (196 aa).

The tract at residues 80 to 83 is involved in Mg(2+) ion dislocation from EF-Tu; sequence TDFV.

This sequence belongs to the EF-Ts family.

It is found in the cytoplasm. In terms of biological role, associates with the EF-Tu.GDP complex and induces the exchange of GDP to GTP. It remains bound to the aminoacyl-tRNA.EF-Tu.GTP complex up to the GTP hydrolysis stage on the ribosome. In Thermus thermophilus (strain ATCC BAA-163 / DSM 7039 / HB27), this protein is Elongation factor Ts.